A 517-amino-acid chain; its full sequence is Tyrosine-protein kinase Src42A (517 aa).

The interval 1–47 is disordered; that stretch reads MGNCLTTQKGEPDKPADRIKLDDPPTIGVGVGVPQIPMPSHAGQPPE. Over residues 10-23 the composition is skewed to basic and acidic residues; sequence GEPDKPADRIKLDD. Positions 63-124 constitute an SH3 domain; it reads ANAKIFVALY…PSNYVAKLKS (62 aa). An SH2 domain is found at 130-222; it reads WYFRKIKRIE…GLCVNLCKPC (93 aa). One can recognise a Protein kinase domain in the interval 248-504; the sequence is LKFVRKLGSG…TLQWKLEDFY (257 aa). ATP contacts are provided by residues 254–262 and lysine 276; that span reads LGSGQFGDV. Residue aspartate 370 is the Proton acceptor of the active site.

The protein belongs to the protein kinase superfamily. Tyr protein kinase family. SRC subfamily. In terms of tissue distribution, ubiquitous in early embryos, in stages 13-16 expression is seen in visceral mesoderm, hindgut, brain, anal pads and ventral ganglions. In larvae, expression is in CNS, wing disk, leg disk and photoreceptor precursors in the eye-antenna disks posterior to the morphogenetic furrow.

The enzyme catalyses L-tyrosyl-[protein] + ATP = O-phospho-L-tyrosyl-[protein] + ADP + H(+). Functionally, required directly or indirectly for the phosphorylation of drpr which is necessary for the interaction of drpr with shark and subsequent glial phagocytic activity. Together with drpr and shark, promotes the migration of macrophages to sites of wounding as part of a signaling cascade where Src42A detects production of hydrogen peroxide at wound sites which triggers phosphorylation of drpr and subsequent recruitment and activation of shark. Essential for correct eye morphogenesis (ommatidial R7 neuron formation) which requires the Ras1/MAPK signal transduction pathway. May be involved in the regulation of cytoskeleton organization and cell-cell contacts in developing ommatidia. Involved in phosphorylation of Dscam1, a cell surface receptor involved in targeting of growing axons during eye morphogenesis, and its interaction partner the SH2/SH3 adapter protein dock/dreadlocks. During embryogenesis, involved in regulation of dorsal closure where it may have a role in activating the JNK pathway in leading edge cells during this process. The polypeptide is Tyrosine-protein kinase Src42A (Drosophila melanogaster (Fruit fly)).